A 642-amino-acid polypeptide reads, in one-letter code: Kinesin-2b (642 aa).

A Kinesin motor domain is found at 12–344 (NVMVMVRVRP…LRYADRAKQI (333 aa)). 107–114 (GQTGSGKT) provides a ligand contact to ATP. Residues glycine 110, glycine 112, lysine 113, and threonine 114 each coordinate ADP. Threonine 114 provides a ligand contact to Mg(2+). A coiled-coil region spans residues 415 to 475 (VQSLRKNLDK…ERKAKERQLM (61 aa)).

Belongs to the TRAFAC class myosin-kinesin ATPase superfamily. Kinesin family. Kinesin II subfamily.

Its subcellular location is the cell projection. The protein resides in the cilium. It localises to the flagellum. It is found in the cytoplasm. The protein localises to the cytoskeleton. Its subcellular location is the flagellum axoneme. The protein resides in the flagellum basal body. Involved in anterograde intraflagellar transport (IFT). Involved in flagellar assembly. This chain is Kinesin-2b, found in Giardia intestinalis (strain ATCC 50803 / WB clone C6) (Giardia lamblia).